A 352-amino-acid chain; its full sequence is Aliphatic aldoxime dehydratase (352 aa).

Ser-219 contacts an aliphatic aldoxime. His-299 contacts heme b. Residue His-320 coordinates an aliphatic aldoxime. His-320 is an active-site residue.

It belongs to the heme-containing dehydratase family. As to quaternary structure, homodimer. Heme b serves as cofactor. Ca(2+) is required as a cofactor.

The enzyme catalyses an aliphatic aldoxime = a nitrile + H2O. With respect to regulation, active when the heme iron is in the ferrous state. Is very sensitive to AgNO(3), is also inhibited by hydroxylamine and phenylhydrazine, and hardly inhibited by thiol reagents. Not sensitive to chelating agents and serine-modifying reagents. In terms of biological role, catalyzes the dehydration of aldoximes to their corresponding nitrile. Aliphatic aldoximes are more effective substrates than aromatic aldoximes. Shows high activity with butyraldoxime and acetaldoxime, but only weak activity with the aromatic aldoxime pyridine-2-aldoxime. Cannot use benzaldoxime, isonitrosoacetophenone and pyridine-4-aldoxime. Is involved in the metabolism of aldoxime in vivo. This Pseudomonas chlororaphis (Pseudomonas aureofaciens) protein is Aliphatic aldoxime dehydratase.